The primary structure comprises 264 residues: S-adenosylmethionine decarboxylase proenzyme (264 aa).

The active-site Schiff-base intermediate with substrate; via pyruvic acid is the S112. Position 112 is a pyruvic acid (Ser); by autocatalysis (S112). The active-site Proton acceptor; for processing activity is the H117. C140 (proton donor; for catalytic activity) is an active-site residue.

This sequence belongs to the prokaryotic AdoMetDC family. Type 2 subfamily. In terms of assembly, heterooctamer of four alpha and four beta chains arranged as a tetramer of alpha/beta heterodimers. Pyruvate serves as cofactor. Is synthesized initially as an inactive proenzyme. Formation of the active enzyme involves a self-maturation process in which the active site pyruvoyl group is generated from an internal serine residue via an autocatalytic post-translational modification. Two non-identical subunits are generated from the proenzyme in this reaction, and the pyruvate is formed at the N-terminus of the alpha chain, which is derived from the carboxyl end of the proenzyme. The post-translation cleavage follows an unusual pathway, termed non-hydrolytic serinolysis, in which the side chain hydroxyl group of the serine supplies its oxygen atom to form the C-terminus of the beta chain, while the remainder of the serine residue undergoes an oxidative deamination to produce ammonia and the pyruvoyl group blocking the N-terminus of the alpha chain.

It catalyses the reaction S-adenosyl-L-methionine + H(+) = S-adenosyl 3-(methylsulfanyl)propylamine + CO2. Its pathway is amine and polyamine biosynthesis; S-adenosylmethioninamine biosynthesis; S-adenosylmethioninamine from S-adenosyl-L-methionine: step 1/1. In terms of biological role, catalyzes the decarboxylation of S-adenosylmethionine to S-adenosylmethioninamine (dcAdoMet), the propylamine donor required for the synthesis of the polyamines spermine and spermidine from the diamine putrescine. The protein is S-adenosylmethionine decarboxylase proenzyme of Klebsiella pneumoniae (strain 342).